Reading from the N-terminus, the 344-residue chain is Ig alpha chain C region (344 aa).

In terms of domain architecture, Ig-like 1 spans 6 to 99 (PTIYPLTLPP…SNPVQELDVN (94 aa)). 2 disulfide bridges follow: cysteine 26–cysteine 84 and cysteine 76–cysteine 100. N-linked (GlcNAc...) asparagine glycosylation is found at asparagine 38 and asparagine 99. The O-linked (GalNAc) serine; in variant MOPC 47A glycan is linked to serine 101. 2 disulfides stabilise this stretch: cysteine 114–cysteine 171 and cysteine 138–cysteine 195. Ig-like domains follow at residues 116–206 (PSLS…GTLT) and 219–321 (PQVH…KTID). Asparagine 329 carries an N-linked (GlcNAc...) asparagine glycan. Serine 331 carries an N-linked (GlcNAc...) asparagine; in variant M511 glycan.

Ig alpha is the major immunoglobulin class in body secretions. It may serve both to defend against local infection and to prevent access of foreign antigens to the general immunologic system. The protein is Ig alpha chain C region of Mus musculus (Mouse).